Consider the following 454-residue polypeptide: Histidine--tRNA ligase (454 aa).

The interval 434 to 454 (ADAGAWNPPTEDLHPGVIGTW) is disordered.

This sequence belongs to the class-II aminoacyl-tRNA synthetase family. As to quaternary structure, homodimer.

The protein resides in the cytoplasm. It catalyses the reaction tRNA(His) + L-histidine + ATP = L-histidyl-tRNA(His) + AMP + diphosphate + H(+). The chain is Histidine--tRNA ligase (hisS) from Cutibacterium acnes (strain DSM 16379 / KPA171202) (Propionibacterium acnes).